The sequence spans 152 residues: Ubiquitin-conjugating enzyme E2 1 (152 aa).

Residues 4–150 (PARKRLMRDF…VRDVVEQSWT (147 aa)) enclose the UBC core domain. The active-site Glycyl thioester intermediate is the Cys-88. Residues 119–152 (NSPANSEAARMYSESKREYNRRVRDVVEQSWTAD) are disordered. Basic and acidic residues predominate over residues 131 to 145 (SESKREYNRRVRDVV).

Belongs to the ubiquitin-conjugating enzyme family. As to expression, ubiquitously expressed.

It catalyses the reaction S-ubiquitinyl-[E1 ubiquitin-activating enzyme]-L-cysteine + [E2 ubiquitin-conjugating enzyme]-L-cysteine = [E1 ubiquitin-activating enzyme]-L-cysteine + S-ubiquitinyl-[E2 ubiquitin-conjugating enzyme]-L-cysteine.. It participates in protein modification; protein ubiquitination. Accepts the ubiquitin from the E1 complex and catalyzes its covalent attachment to other proteins. The sequence is that of Ubiquitin-conjugating enzyme E2 1 (UBC1) from Arabidopsis thaliana (Mouse-ear cress).